Reading from the N-terminus, the 595-residue chain is UvrABC system protein C (595 aa).

In terms of domain architecture, GIY-YIG spans 14 to 91 (SNPGCYLHKD…IQENMPKFNI (78 aa)). The region spanning 196-231 (DKIVNQLKAKMKDMSDQMAFERAAEYRDLIEAVSTL) is the UVR domain.

Belongs to the UvrC family. As to quaternary structure, interacts with UvrB in an incision complex.

It localises to the cytoplasm. In terms of biological role, the UvrABC repair system catalyzes the recognition and processing of DNA lesions. UvrC both incises the 5' and 3' sides of the lesion. The N-terminal half is responsible for the 3' incision and the C-terminal half is responsible for the 5' incision. In Streptococcus thermophilus (strain ATCC BAA-491 / LMD-9), this protein is UvrABC system protein C.